The sequence spans 160 residues: Cyclic pyranopterin monophosphate synthase (160 aa).

Residues 77 to 79 and 114 to 115 each bind substrate; these read MCH and ME. Asp-129 is an active-site residue.

It belongs to the MoaC family. In terms of assembly, homohexamer; trimer of dimers.

The catalysed reaction is (8S)-3',8-cyclo-7,8-dihydroguanosine 5'-triphosphate = cyclic pyranopterin phosphate + diphosphate. It functions in the pathway cofactor biosynthesis; molybdopterin biosynthesis. Catalyzes the conversion of (8S)-3',8-cyclo-7,8-dihydroguanosine 5'-triphosphate to cyclic pyranopterin monophosphate (cPMP). The polypeptide is Cyclic pyranopterin monophosphate synthase (Listeria innocua serovar 6a (strain ATCC BAA-680 / CLIP 11262)).